The following is a 157-amino-acid chain: XylDLEGF operon transcriptional activator 2 (157 aa).

One can recognise an HTH araC/xylS-type domain in the interval 39–140; the sequence is ERVVQFIEEN…GELPSDTLSL (102 aa). 2 DNA-binding regions (H-T-H motif) span residues 56-77 and 107-130; these read EQLA…EKHT and ITEV…RSTF.

It localises to the cytoplasm. Its function is as follows. Regulatory protein of the TOL plasmid xyl operons. XylS activates the xylXYZLTEGFJQKIH operon required for the degradation of toluene, m-xylene and p-xylene. The protein is XylDLEGF operon transcriptional activator 2 (xylS2) of Pseudomonas putida (Arthrobacter siderocapsulatus).